We begin with the raw amino-acid sequence, 284 residues long: Quinate/shikimate dehydrogenase (NAD(+)) (284 aa).

Positions 18 and 70 each coordinate shikimate. Residues 18–20 (SRT) and Thr70 contribute to the L-quinate site. Tyr73 serves as the catalytic Proton acceptor. Shikimate contacts are provided by Lys74, Asn95, and Asp111. Lys74, Asn95, and Asp111 together coordinate L-quinate. NAD(+)-binding positions include 137 to 138 (GG), Asp159, Arg164, 203 to 206 (TPMG), Ala214, Val229, and Gly252. Gln259 provides a ligand contact to shikimate. Gln259 contacts L-quinate.

The protein belongs to the shikimate dehydrogenase family. In terms of assembly, homodimer.

It carries out the reaction L-quinate + NAD(+) = 3-dehydroquinate + NADH + H(+). The catalysed reaction is shikimate + NAD(+) = 3-dehydroshikimate + NADH + H(+). It functions in the pathway metabolic intermediate biosynthesis; chorismate biosynthesis; chorismate from D-erythrose 4-phosphate and phosphoenolpyruvate: step 4/7. Its pathway is aromatic compound metabolism; 3,4-dihydroxybenzoate biosynthesis; 3-dehydroquinate from D-quinate (NAD(+) route). Its function is as follows. Involved in the biosynthesis of the chorismate, which leads to the biosynthesis of aromatic amino acids, and plays a key role in the quinate degradation pathway. Catalyzes the NAD(+)-dependent oxidation of both quinate and shikimate to 3-dehydroquinate and 3-dehydroshikimate, respectively. It can only use NAD. This is Quinate/shikimate dehydrogenase (NAD(+)) from Corynebacterium efficiens (strain DSM 44549 / YS-314 / AJ 12310 / JCM 11189 / NBRC 100395).